The primary structure comprises 198 residues: GTP-binding protein Di-Ras1 (198 aa).

GTP contacts are provided by residues 17–22 (GVGKSS), 33–39 (RDTYIPT), 61–65 (DTTGS), 121–125 (NKCDE), Ala-151, and 151–152 (AK). An Effector region motif is present at residues 36–44 (YIPTIEDTY). Basic and acidic residues predominate over residues 178-192 (DGKRSGKQKRTDRVK). A disordered region spans residues 178 to 198 (DGKRSGKQKRTDRVKGKCTLM). At Cys-195 the chain carries Cysteine methyl ester. Cys-195 is lipidated: S-geranylgeranyl cysteine. Residues 196-198 (TLM) constitute a propeptide, removed in mature form.

It belongs to the small GTPase superfamily. Di-Ras family. In terms of tissue distribution, highly expressed in heart and brain.

Its subcellular location is the cell membrane. Displays low GTPase activity and exists predominantly in the GTP-bound form. In Homo sapiens (Human), this protein is GTP-binding protein Di-Ras1 (DIRAS1).